Here is a 733-residue protein sequence, read N- to C-terminus: Phosphoribosylformylglycinamidine synthase subunit PurL (733 aa).

Residue His32 is part of the active site. An ATP-binding site is contributed by Tyr35. Residue Glu81 coordinates Mg(2+). Substrate-binding positions include Ser82–His85 and Arg104. The active-site Proton acceptor is His83. Asp105 contacts Mg(2+). Gln230 serves as a coordination point for substrate. Residue Asp258 coordinates Mg(2+). Substrate is bound at residue Glu301–Gln303. ATP-binding residues include Asp482 and Gly519. Position 520 (Asn520) interacts with Mg(2+). Ser522 is a binding site for substrate.

The protein belongs to the FGAMS family. In terms of assembly, monomer. Part of the FGAM synthase complex composed of 1 PurL, 1 PurQ and 2 PurS subunits.

It localises to the cytoplasm. It carries out the reaction N(2)-formyl-N(1)-(5-phospho-beta-D-ribosyl)glycinamide + L-glutamine + ATP + H2O = 2-formamido-N(1)-(5-O-phospho-beta-D-ribosyl)acetamidine + L-glutamate + ADP + phosphate + H(+). Its pathway is purine metabolism; IMP biosynthesis via de novo pathway; 5-amino-1-(5-phospho-D-ribosyl)imidazole from N(2)-formyl-N(1)-(5-phospho-D-ribosyl)glycinamide: step 1/2. Its function is as follows. Part of the phosphoribosylformylglycinamidine synthase complex involved in the purines biosynthetic pathway. Catalyzes the ATP-dependent conversion of formylglycinamide ribonucleotide (FGAR) and glutamine to yield formylglycinamidine ribonucleotide (FGAM) and glutamate. The FGAM synthase complex is composed of three subunits. PurQ produces an ammonia molecule by converting glutamine to glutamate. PurL transfers the ammonia molecule to FGAR to form FGAM in an ATP-dependent manner. PurS interacts with PurQ and PurL and is thought to assist in the transfer of the ammonia molecule from PurQ to PurL. In Methanocaldococcus jannaschii (strain ATCC 43067 / DSM 2661 / JAL-1 / JCM 10045 / NBRC 100440) (Methanococcus jannaschii), this protein is Phosphoribosylformylglycinamidine synthase subunit PurL.